A 378-amino-acid chain; its full sequence is tRNA-specific 2-thiouridylase MnmA (378 aa).

ATP contacts are provided by residues 9–16 (GVSGGVDS) and methionine 35. The segment at 94–96 (NPD) is interaction with target base in tRNA. Residue cysteine 99 is the Nucleophile of the active site. An intrachain disulfide couples cysteine 99 to cysteine 195. Residue glycine 123 coordinates ATP. An interaction with tRNA region spans residues 145–147 (KDQ). Cysteine 195 (cysteine persulfide intermediate) is an active-site residue. The tract at residues 307–308 (RY) is interaction with tRNA.

It belongs to the MnmA/TRMU family.

The protein resides in the cytoplasm. It catalyses the reaction S-sulfanyl-L-cysteinyl-[protein] + uridine(34) in tRNA + AH2 + ATP = 2-thiouridine(34) in tRNA + L-cysteinyl-[protein] + A + AMP + diphosphate + H(+). Functionally, catalyzes the 2-thiolation of uridine at the wobble position (U34) of tRNA, leading to the formation of s(2)U34. This is tRNA-specific 2-thiouridylase MnmA from Xanthomonas euvesicatoria pv. vesicatoria (strain 85-10) (Xanthomonas campestris pv. vesicatoria).